Consider the following 492-residue polypeptide: N-succinylglutamate 5-semialdehyde dehydrogenase (492 aa).

220–225 contacts NAD(+); sequence GSANTG. Catalysis depends on residues glutamate 243 and cysteine 277.

The protein belongs to the aldehyde dehydrogenase family. AstD subfamily.

It catalyses the reaction N-succinyl-L-glutamate 5-semialdehyde + NAD(+) + H2O = N-succinyl-L-glutamate + NADH + 2 H(+). It functions in the pathway amino-acid degradation; L-arginine degradation via AST pathway; L-glutamate and succinate from L-arginine: step 4/5. Functionally, catalyzes the NAD-dependent reduction of succinylglutamate semialdehyde into succinylglutamate. This Escherichia coli O6:H1 (strain CFT073 / ATCC 700928 / UPEC) protein is N-succinylglutamate 5-semialdehyde dehydrogenase.